Consider the following 683-residue polypeptide: MKTFCGRANPTTGALDWVEESEEYDYHQEIARSCYADMLHDKDRNEKYYEGIRAAVRRVKARGERPVVLDIGTGTGLLSMMAVTAGADFCYAIEVFKPMAQAASCIVERNGFSDKIKIINKHSTEVTVGPDGDMQERANILVTELFDTELIGEGALPSYEHAHMHLVQTGCEAVPHRATIYAQLVESDMLWKWAQMRPIDVDGHRLMPPGAVQECAGAPSVCDIQLSQVPTDAFTAISPVCTMFSVDFSKPVSSAAQSYTVRFKSQTGGRAQVVLSWWDIDMDPEGNIVCTMAPSWSYADPHAYPWRDHWMQSVYFLPAEENVSEGEELMLMVSHDDYSLWYSLTHSEQNDVRVAPFRPCCTCQAHLVWTRPRFGELNDEQRTESYVSALRSILKPDSVCLSVSDGSLLPVFAHLLGSKKVFSLESSGMAKQVIEQVLHTNSLKDGVQLLGIRAEQLSLADLDGNQISVLMGEPYFSTSLLPWHSLFFWYCRTAVAQLLQPDATILPRAATLYAVAVEFQDLWRIRFPCGTCEGFDVSPMDEMIQRSLDFRESWEAEPHPLWEYPCRALTKPCPVMTFDFTQCVPEQPISSDGAVPFTGRGRCHGVALWMEYQLTDDISVSMGLTKAVSQEGACEWNPHRKQGVFFFRSAKETSGDGREDLSYSLTFEPHSGDIKMDFSITES.

SAM-dependent MTase PRMT-type domains lie at 14 to 341 and 353 to 677; these read ALDW…YSLW and RVAP…IKMD. Active-site residues include glutamate 144 and glutamate 153.

It belongs to the class I-like SAM-binding methyltransferase superfamily. Protein arginine N-methyltransferase family. PRMT7 subfamily.

The protein resides in the cytoplasm. It localises to the cytosol. The protein localises to the nucleus. It catalyses the reaction L-arginyl-[protein] + S-adenosyl-L-methionine = N(omega)-methyl-L-arginyl-[protein] + S-adenosyl-L-homocysteine + H(+). Arginine methyltransferase that can both catalyze the formation of omega-N monomethylarginine (MMA) and symmetrical dimethylarginine (sDMA), with a preference for the formation of MMA. Specifically mediates the symmetrical dimethylation of arginine residues in the small nuclear ribonucleoproteins Sm D1 (SNRPD1) and Sm D3 (SNRPD3); such methylation being required for the assembly and biogenesis of snRNP core particles. Specifically mediates the symmetric dimethylation of histone H4 'Arg-3' to form H4R3me2s. Plays a role in gene imprinting by being recruited by CTCFL at the H19 imprinted control region (ICR) and methylating histone H4 to form H4R3me2s, possibly leading to recruit DNA methyltransferases at these sites. May also play a role in embryonic stem cell (ESC) pluripotency. Also able to mediate the arginine methylation of histone H2A and myelin basic protein (MBP) in vitro; the relevance of such results is however unclear in vivo. This Danio rerio (Zebrafish) protein is Protein arginine N-methyltransferase 7 (prmt7).